The primary structure comprises 687 residues: Guanine-nucleotide exchange factor YEL1 (687 aa).

Polar residues predominate over residues 14-27 (YGVSQKGYNDNFSE). 2 disordered regions span residues 14–35 (YGVSQKGYNDNFSESEGVLHGS) and 63–97 (AANDEKPVIPTTDTATAGTGTEDISSTQSEETDQN). The SEC7 domain maps to 57-264 (ILQNKEAAND…SEYYKTLNET (208 aa)). The span at 73-83 (TTDTATAGTGT) shows a compositional bias: low complexity. Position 290 is a phosphothreonine (Thr-290). Phosphoserine is present on residues Ser-293 and Ser-299. In terms of domain architecture, PH spans 412 to 551 (ASRRTSLSYL…DCINFWAGRI (140 aa)).

The protein belongs to the YEL1 family.

The protein resides in the cytoplasm. The protein localises to the cell membrane. It localises to the bud neck. Its subcellular location is the bud tip. In terms of biological role, guanine nucleotide exchange factor for ARF3 required for localization of ARF3 to the bud neck and tip and involved in actin patch polarization. This is Guanine-nucleotide exchange factor YEL1 (YEL1) from Saccharomyces cerevisiae (strain RM11-1a) (Baker's yeast).